The sequence spans 232 residues: Cilia- and flagella-associated protein 95 (232 aa).

The Extracellular portion of the chain corresponds to 1–96 (MDSSDSSCQE…PVWISETREK (96 aa)). N-linked (GlcNAc...) asparagine glycosylation is present at Asn75. A helical membrane pass occupies residues 97-115 (MAQVCLNTKLAKIKSKALL). At 116–232 (NEETMNSGII…TGGPIAPFLK (117 aa)) the chain is on the cytoplasmic side. The tract at residues 153–163 (LTTYAEEYAPP) is mn.

In terms of assembly, microtubule inner protein component of sperm flagellar doublet microtubules. Interacts with MYH9. Interacts with MYH10. In terms of tissue distribution, expressed in trachea multiciliated cells.

The protein localises to the cytoplasm. Its subcellular location is the cytoskeleton. It is found in the cilium axoneme. It localises to the flagellum axoneme. The protein resides in the cell membrane. Microtubule inner protein (MIP) part of the dynein-decorated doublet microtubules (DMTs) in cilia axoneme, which is required for motile cilia beating. This is Cilia- and flagella-associated protein 95 from Bos taurus (Bovine).